Consider the following 411-residue polypeptide: Peptidase T (411 aa).

His79 serves as a coordination point for Zn(2+). Asp81 is a catalytic residue. Asp142 provides a ligand contact to Zn(2+). Glu176 serves as the catalytic Proton acceptor. Zn(2+)-binding residues include Glu177, Asp199, and His381.

It belongs to the peptidase M20B family. It depends on Zn(2+) as a cofactor.

It is found in the cytoplasm. The enzyme catalyses Release of the N-terminal residue from a tripeptide.. Its function is as follows. Cleaves the N-terminal amino acid of tripeptides. This chain is Peptidase T, found in Geobacillus kaustophilus (strain HTA426).